The chain runs to 397 residues: MYQSLALAASPRQAAYADSGSFLHAPGAGSPMFVPPARVPSMLSYLSGCEPSPQPPELAARPGWAQTATADSSAFGPGSPHPPAAHPPGATAFPFAHSPSGPGSGGSAGGRDGSAYQGALLPREQFAAPLGRPVGTSYSATYPAYVSPDVAQSWTAGPFDGSVLHGLPGRRPTFVSDFLEEFPGEGRECVNCGALSTPLWRRDGTGHYLCNACGLYHKMNGVNRPLVRPQKRLSSSRRAGLCCTNCHTTNTTLWRRNSEGEPVCNACGLYMKLHGVPRPLAMKKESIQTRKRKPKTIAKARGSSGSTRNASASPSAVASTDSSAATSKAKPSLASPVCPGPSMAPQASGQEDDSLAPGHLEFKFEPEDFAFPSTAPSPQAGLRGALRQEAWCALALA.

The tract at residues 48-116 (GCEPSPQPPE…SAGGRDGSAY (69 aa)) is disordered. Over residues 87–101 (PPGATAFPFAHSPSG) the composition is skewed to low complexity. The segment covering 102 to 112 (PGSGGSAGGRD) has biased composition (gly residues). 2 consecutive GATA-type zinc fingers follow at residues 189–213 (CVNCGALSTPLWRRDGTGHYLCNAC) and 243–267 (CTNCHTTNTTLWRRNSEGEPVCNAC). Residues 281-356 (AMKKESIQTR…ASGQEDDSLA (76 aa)) form a disordered region. Positions 289–298 (TRKRKPKTIA) are enriched in basic residues. The segment covering 310–335 (ASASPSAVASTDSSAATSKAKPSLAS) has biased composition (low complexity).

The protein localises to the nucleus. In terms of biological role, transcription factor required during cardiovascular development. Plays an important role in the transcriptional program(s) that underlies smooth muscle cell diversity. Binds to the functionally important CEF-1 nuclear protein binding site in the cardiac-specific slow/cardiac troponin C transcriptional enhancer. This Homo sapiens (Human) protein is Transcription factor GATA-5.